Consider the following 347-residue polypeptide: sn-1 oleoyl-lipid 12-desaturase (347 aa).

2 helical membrane-spanning segments follow: residues 41–63 (AWSR…AIAP) and 67–85 (LLPV…FVIG). The short motif at 86–90 (HDCGH) is the Histidine box-1 element. A helical membrane pass occupies residues 98–118 (WVNNLVGHLAFLPLIYPFHSW). A Histidine box-2 motif is present at residues 122–126 (HNHHH). The next 3 helical transmembrane spans lie at 164–184 (LWWL…FAFE), 196–216 (LFVI…LGVW), and 218–238 (VVKF…TFTL). Residues 286–290 (HHLST) carry the Histidine box-3 motif.

Belongs to the fatty acid desaturase type 2 family. Fe(2+) serves as cofactor.

The protein resides in the membrane. The catalysed reaction is a 1-[(9Z)-octadecenoyl]-2-acyl-glycerolipid + 2 reduced [2Fe-2S]-[ferredoxin] + O2 + 2 H(+) = a 1-[(9Z,12Z)-octadecdienoyl]-2-acyl-glycerolipid + 2 oxidized [2Fe-2S]-[ferredoxin] + 2 H2O. It participates in lipid metabolism; polyunsaturated fatty acid biosynthesis. Desaturase involved in fatty acid biosynthesis. Introduces a double bond at carbon 12 of oleoyl groups (18:1) attached to the sn-1 position of the glycerol moiety of membrane glycerolipids. Can also efficiently catalyze the desaturation of palmitoleic acid (16:1) in vitro. This chain is sn-1 oleoyl-lipid 12-desaturase, found in Picosynechococcus sp. (strain ATCC 27264 / PCC 7002 / PR-6) (Agmenellum quadruplicatum).